Reading from the N-terminus, the 200-residue chain is Transcriptional repressor NrdR (200 aa).

A zinc finger lies at 3–34 (CPRCGKQEIRVLESRSAEGGQSVRRRRECMSC). Residues 49–139 (IMVIKRDGSR…VYRKFQGIKD (91 aa)) enclose the ATP-cone domain. The tract at residues 158-200 (LERPLRNSPPSESESTASPDWVGGIPQLLDQNDTSSNLSEIPK) is disordered. Over residues 186 to 200 (LDQNDTSSNLSEIPK) the composition is skewed to polar residues.

The protein belongs to the NrdR family. It depends on Zn(2+) as a cofactor.

In terms of biological role, negatively regulates transcription of bacterial ribonucleotide reductase nrd genes and operons by binding to NrdR-boxes. This is Transcriptional repressor NrdR from Synechococcus sp. (strain JA-3-3Ab) (Cyanobacteria bacterium Yellowstone A-Prime).